Here is a 669-residue protein sequence, read N- to C-terminus: Dymeclin (669 aa).

Residue Gly-2 is the site of N-myristoyl glycine attachment.

Belongs to the dymeclin family. As to quaternary structure, interacts with GOLM1 and PPIB. Post-translationally, myristoylated in vitro; myristoylation is not essential for protein targeting to Golgi compartment.

It localises to the cytoplasm. The protein localises to the golgi apparatus. The protein resides in the membrane. In terms of biological role, necessary for correct organization of Golgi apparatus. Involved in bone development. The protein is Dymeclin (Dym) of Mus musculus (Mouse).